A 560-amino-acid polypeptide reads, in one-letter code: Zinc finger protein 250 (560 aa).

In terms of domain architecture, KRAB spans 22–93 (LTFEDVAVLL…DRKGAKKSQG (72 aa)). Residues Lys125, Lys136, Lys148, and Lys162 each participate in a glycyl lysine isopeptide (Lys-Gly) (interchain with G-Cter in SUMO2) cross-link. A C2H2-type 1 zinc finger spans residues 199 to 221 (YMCVECGKCFGRSSHLLQHQRIH). Lys225 participates in a covalent cross-link: Glycyl lysine isopeptide (Lys-Gly) (interchain with G-Cter in SUMO2). 7 consecutive C2H2-type zinc fingers follow at residues 227 to 249 (YVCS…RRIH), 255 to 277 (YECN…HKIH), 283 to 305 (HECL…QRIH), 311 to 333 (YVCP…QRVH), 339 to 361 (HRCN…QRIH), 367 to 389 (YTCS…HNVH), and 395 to 417 (YECS…ERIH). Lys421 participates in a covalent cross-link: Glycyl lysine isopeptide (Lys-Gly) (interchain with G-Cter in SUMO2). 5 C2H2-type zinc fingers span residues 423–445 (YACY…QRVH), 451–473 (YVCG…ERIH), 479–501 (FQCT…LRTH), 507–529 (YECN…QRIH), and 535–557 (YECG…QKVH).

Belongs to the krueppel C2H2-type zinc-finger protein family.

The protein resides in the nucleus. In terms of biological role, may be involved in transcriptional regulation. This Homo sapiens (Human) protein is Zinc finger protein 250 (ZNF250).